The following is a 350-amino-acid chain: Kelch domain-containing protein 9 (350 aa).

3 Kelch repeats span residues 39–89 (RFYL…LVGG), 91–137 (WLCV…SHTC), and 325–350 (QLYLVGGFGEDGRTASPQVCILEFFI).

In terms of assembly, interacts with CCNA1.

This Mus musculus (Mouse) protein is Kelch domain-containing protein 9 (Klhdc9).